Reading from the N-terminus, the 396-residue chain is Elongation factor Tu 1 (396 aa).

The region spanning 10–206 (KPHVNIGTIG…AVDEYIPTPE (197 aa)) is the tr-type G domain. The G1 stretch occupies residues 19 to 26 (GHVDHGKT). 19–26 (GHVDHGKT) is a GTP binding site. T26 lines the Mg(2+) pocket. The segment at 60-64 (GITIN) is G2. The G3 stretch occupies residues 81-84 (DCPG). GTP is bound by residues 81–85 (DCPGH) and 136–139 (NKVD). The interval 136-139 (NKVD) is G4. Positions 174 to 176 (SAL) are G5.

The protein belongs to the TRAFAC class translation factor GTPase superfamily. Classic translation factor GTPase family. EF-Tu/EF-1A subfamily. As to quaternary structure, monomer.

The protein localises to the cytoplasm. The catalysed reaction is GTP + H2O = GDP + phosphate + H(+). Its function is as follows. GTP hydrolase that promotes the GTP-dependent binding of aminoacyl-tRNA to the A-site of ribosomes during protein biosynthesis. The polypeptide is Elongation factor Tu 1 (Hyphomonas neptunium (strain ATCC 15444)).